We begin with the raw amino-acid sequence, 148 residues long: Cytochrome c-type biogenesis protein CcmE (148 aa).

Residues 1 to 7 lie on the Cytoplasmic side of the membrane; the sequence is MKARNKR. Residues 8-28 traverse the membrane as a helical; Signal-anchor for type II membrane protein segment; it reads LMLVGGGIALLVAAAALVLSA. Topologically, residues 29-148 are periplasmic; it reads FQQNLVFFHT…AHKTATTVQQ (120 aa). Heme-binding residues include histidine 123 and tyrosine 127.

It belongs to the CcmE/CycJ family.

It localises to the cell inner membrane. Heme chaperone required for the biogenesis of c-type cytochromes. Transiently binds heme delivered by CcmC and transfers the heme to apo-cytochromes in a process facilitated by CcmF and CcmH. This chain is Cytochrome c-type biogenesis protein CcmE, found in Azoarcus sp. (strain BH72).